Here is a 361-residue protein sequence, read N- to C-terminus: Hydroxycarboxylate dehydrogenase B (361 aa).

NAD(+) is bound by residues His48, 122–124 (GRI), 178–182 (LLDYA), His234, Asn270, and 313–316 (GEWE).

It belongs to the LDH2/MDH2 oxidoreductase family.

The catalysed reaction is 2-hydroxyglutarate + NADP(+) = 2-oxoglutarate + NADPH + H(+). It carries out the reaction 2-hydroxyglutarate + NAD(+) = 2-oxoglutarate + NADH + H(+). It catalyses the reaction 3-phenyllactate + NADP(+) = 3-phenylpyruvate + NADPH + H(+). The enzyme catalyses 3-phenyllactate + NAD(+) = 3-phenylpyruvate + NADH + H(+). The catalysed reaction is (2R)-2-hydroxy-3-(4-hydroxyphenyl)propanoate + NAD(+) = 3-(4-hydroxyphenyl)pyruvate + NADH + H(+). It carries out the reaction (2R)-2-hydroxy-3-(4-hydroxyphenyl)propanoate + NADP(+) = 3-(4-hydroxyphenyl)pyruvate + NADPH + H(+). It catalyses the reaction (2R)-3-(3,4-dihydroxyphenyl)lactate + NADP(+) = 3-(3,4-dihydroxyphenyl)pyruvate + NADPH + H(+). The enzyme catalyses (2R)-3-(3,4-dihydroxyphenyl)lactate + NAD(+) = 3-(3,4-dihydroxyphenyl)pyruvate + NADH + H(+). Functionally, catalyzes the NAD(P)H-dependent reduction of 2-oxoglutarate, phenylpyruvate and (4-hydroxyphenyl)pyruvate, leading to the respective 2-hydroxycarboxylate in vitro. Shows a preference for NADPH over NADH as a redox partner. Do not catalyze the reverse reactions. The sequence is that of Hydroxycarboxylate dehydrogenase B from Escherichia coli (strain K12).